The primary structure comprises 426 residues: Probable serine/threonine-protein kinase PBL3 (426 aa).

The disordered stretch occupies residues 1-42 (MGNCLDSSAKVDSSSHSPHANSASLSSRVSSKTSRSTVPSSL). Residue G2 is the site of N-myristoyl glycine attachment. A lipid anchor (S-palmitoyl cysteine) is attached at C4. Residues 7–42 (SSAKVDSSSHSPHANSASLSSRVSSKTSRSTVPSSL) are compositionally biased toward low complexity. A Phosphothreonine modification is found at T72. The 284-residue stretch at 83-366 (FRPDSLLGEG…SEVLAKLDQL (284 aa)) folds into the Protein kinase domain. Residues 89–97 (LGEGGFGYV) and K121 each bind ATP. Position 166 is a phosphotyrosine (Y166). D216 (proton acceptor) is an active-site residue. S250 carries the phosphoserine modification. Residues T251 and T256 each carry the phosphothreonine modification. At Y264 the chain carries Phosphotyrosine. The span at 367–394 (ESTKPGTGVGNRQAQIDSPRGSNGSIVQ) shows a compositional bias: polar residues. The tract at residues 367–426 (ESTKPGTGVGNRQAQIDSPRGSNGSIVQKSPRRYSYDRPLLHITPGASPLPTHNHSPRVR) is disordered.

This sequence belongs to the protein kinase superfamily. Ser/Thr protein kinase family. As to quaternary structure, interacts with the Xanthomonas campestris effector XopAC/AvrAC. As to expression, strongly expressed in leaves, moderately in flowers, and barely in roots.

The protein resides in the cell membrane. It is found in the nucleus. The catalysed reaction is L-seryl-[protein] + ATP = O-phospho-L-seryl-[protein] + ADP + H(+). It catalyses the reaction L-threonyl-[protein] + ATP = O-phospho-L-threonyl-[protein] + ADP + H(+). In terms of biological role, may be involved in plant defense signaling. The polypeptide is Probable serine/threonine-protein kinase PBL3 (Arabidopsis thaliana (Mouse-ear cress)).